Here is a 209-residue protein sequence, read N- to C-terminus: Kynurenine formamidase (209 aa).

Phe-18 is a binding site for substrate. Positions 48, 52, and 54 each coordinate Zn(2+). His-58 serves as the catalytic Proton donor/acceptor. Positions 160 and 172 each coordinate Zn(2+).

This sequence belongs to the Cyclase 1 superfamily. KynB family. In terms of assembly, homodimer. Requires Zn(2+) as cofactor.

It carries out the reaction N-formyl-L-kynurenine + H2O = L-kynurenine + formate + H(+). The protein operates within amino-acid degradation; L-tryptophan degradation via kynurenine pathway; L-kynurenine from L-tryptophan: step 2/2. Its function is as follows. Catalyzes the hydrolysis of N-formyl-L-kynurenine to L-kynurenine, the second step in the kynurenine pathway of tryptophan degradation. The protein is Kynurenine formamidase of Bordetella avium (strain 197N).